Reading from the N-terminus, the 323-residue chain is Serpentine receptor class gamma-5 (323 aa).

The next 7 helical transmembrane spans lie at 31 to 51, 63 to 83, 98 to 117, 151 to 171, 193 to 213, 245 to 265, and 272 to 292; these read QLFY…IMLF, FIIF…DLFI, YPLF…IYNY, IPVT…NVII, WASL…ITVF, AAFF…ITAA, and FLQG…MVLI.

This sequence belongs to the nematode receptor-like protein srg family.

It localises to the membrane. The sequence is that of Serpentine receptor class gamma-5 (srg-5) from Caenorhabditis elegans.